The sequence spans 247 residues: Probable transcriptional regulatory protein SynWH7803_1972 (247 aa).

The protein belongs to the TACO1 family.

The protein resides in the cytoplasm. The chain is Probable transcriptional regulatory protein SynWH7803_1972 from Synechococcus sp. (strain WH7803).